Consider the following 238-residue polypeptide: Ribosomal RNA small subunit methyltransferase G (238 aa).

Residues glycine 77, phenylalanine 82, 128–129 (AE), and arginine 147 contribute to the S-adenosyl-L-methionine site.

Belongs to the methyltransferase superfamily. RNA methyltransferase RsmG family.

It is found in the cytoplasm. Its function is as follows. Specifically methylates the N7 position of guanine in position 535 of 16S rRNA. The chain is Ribosomal RNA small subunit methyltransferase G from Listeria monocytogenes serotype 4b (strain CLIP80459).